A 168-amino-acid polypeptide reads, in one-letter code: Monothiol glutaredoxin-S7, chloroplastic (168 aa).

The N-terminal 54 residues, 1-54 (MAATAAASVAAISPLPGASLPRPVSARVPLLPRASPPTWRLSVGSARARSTRCL), are a transit peptide targeting the chloroplast. The Glutaredoxin domain occupies 67–168 (RATLDKVVGS…QETLEKAMLS (102 aa)). K84 serves as a coordination point for glutathione. C92 provides a ligand contact to [2Fe-2S] cluster. Residues R121, F133, and 146–147 (CD) each bind glutathione.

Belongs to the glutaredoxin family. CGFS subfamily.

The protein localises to the plastid. The protein resides in the chloroplast. May only reduce GSH-thiol disulfides, but not protein disulfides. In Oryza sativa subsp. japonica (Rice), this protein is Monothiol glutaredoxin-S7, chloroplastic (GRXS7).